We begin with the raw amino-acid sequence, 170 residues long: Protein-export protein SecB (170 aa).

Belongs to the SecB family. In terms of assembly, homotetramer, a dimer of dimers. One homotetramer interacts with 1 SecA dimer.

The protein resides in the cytoplasm. In terms of biological role, one of the proteins required for the normal export of preproteins out of the cell cytoplasm. It is a molecular chaperone that binds to a subset of precursor proteins, maintaining them in a translocation-competent state. It also specifically binds to its receptor SecA. The protein is Protein-export protein SecB of Pasteurella multocida (strain Pm70).